A 264-amino-acid polypeptide reads, in one-letter code: ATP synthase subunit a (264 aa).

Helical transmembrane passes span 39-59 (LDTL…FYII), 97-117 (VAPL…MDLV), 139-159 (TADP…VVFY), 205-225 (LFGN…LPWW), and 239-259 (LLVI…YISL).

This sequence belongs to the ATPase A chain family. As to quaternary structure, F-type ATPases have 2 components, CF(1) - the catalytic core - and CF(0) - the membrane proton channel. CF(1) has five subunits: alpha(3), beta(3), gamma(1), delta(1), epsilon(1). CF(0) has three main subunits: a(1), b(2) and c(9-12). The alpha and beta chains form an alternating ring which encloses part of the gamma chain. CF(1) is attached to CF(0) by a central stalk formed by the gamma and epsilon chains, while a peripheral stalk is formed by the delta and b chains.

The protein resides in the cell inner membrane. In terms of biological role, key component of the proton channel; it plays a direct role in the translocation of protons across the membrane. The protein is ATP synthase subunit a of Coxiella burnetii (strain CbuG_Q212) (Coxiella burnetii (strain Q212)).